A 330-amino-acid polypeptide reads, in one-letter code: DNA-directed RNA polymerase subunit alpha (330 aa).

Positions 1–235 (MQGSVTEFLK…EQLEAFVDLR (235 aa)) are alpha N-terminal domain (alpha-NTD). The segment at 249-330 (FDPILLRPVD…WPPASIADNE (82 aa)) is alpha C-terminal domain (alpha-CTD).

This sequence belongs to the RNA polymerase alpha chain family. As to quaternary structure, homodimer. The RNAP catalytic core consists of 2 alpha, 1 beta, 1 beta' and 1 omega subunit. When a sigma factor is associated with the core the holoenzyme is formed, which can initiate transcription.

It catalyses the reaction RNA(n) + a ribonucleoside 5'-triphosphate = RNA(n+1) + diphosphate. Its function is as follows. DNA-dependent RNA polymerase catalyzes the transcription of DNA into RNA using the four ribonucleoside triphosphates as substrates. In Yersinia enterocolitica serotype O:8 / biotype 1B (strain NCTC 13174 / 8081), this protein is DNA-directed RNA polymerase subunit alpha.